The chain runs to 379 residues: Putative glutamate--cysteine ligase 2 (379 aa).

It belongs to the glutamate--cysteine ligase type 2 family. YbdK subfamily.

The catalysed reaction is L-cysteine + L-glutamate + ATP = gamma-L-glutamyl-L-cysteine + ADP + phosphate + H(+). Its function is as follows. ATP-dependent carboxylate-amine ligase which exhibits weak glutamate--cysteine ligase activity. This is Putative glutamate--cysteine ligase 2 from Roseiflexus castenholzii (strain DSM 13941 / HLO8).